Consider the following 183-residue polypeptide: Ribosome-recycling factor (183 aa).

Belongs to the RRF family.

It localises to the cytoplasm. Its function is as follows. Responsible for the release of ribosomes from messenger RNA at the termination of protein biosynthesis. May increase the efficiency of translation by recycling ribosomes from one round of translation to another. This Deinococcus deserti (strain DSM 17065 / CIP 109153 / LMG 22923 / VCD115) protein is Ribosome-recycling factor.